The chain runs to 126 residues: Ribonuclease P protein component (126 aa).

This sequence belongs to the RnpA family. As to quaternary structure, consists of a catalytic RNA component (M1 or rnpB) and a protein subunit.

The enzyme catalyses Endonucleolytic cleavage of RNA, removing 5'-extranucleotides from tRNA precursor.. Functionally, RNaseP catalyzes the removal of the 5'-leader sequence from pre-tRNA to produce the mature 5'-terminus. It can also cleave other RNA substrates such as 4.5S RNA. The protein component plays an auxiliary but essential role in vivo by binding to the 5'-leader sequence and broadening the substrate specificity of the ribozyme. The chain is Ribonuclease P protein component from Rhodococcus erythropolis (strain PR4 / NBRC 100887).